The chain runs to 342 residues: Protein-glutamate methylesterase/protein-glutamine glutaminase 1 (342 aa).

The Response regulatory domain maps to 2–119 (RVAIVNDMPL…GDPKAAAQRL (118 aa)). Aspartate 53 bears the 4-aspartylphosphate mark. Residues 146-329 (SDTDAALVVI…LPLGDIAPRL (184 aa)) enclose the CheB-type methylesterase domain. Catalysis depends on residues serine 158, histidine 185, and aspartate 278.

The protein belongs to the CheB family. Post-translationally, phosphorylated by CheA. Phosphorylation of the N-terminal regulatory domain activates the methylesterase activity.

It is found in the cytoplasm. The enzyme catalyses [protein]-L-glutamate 5-O-methyl ester + H2O = L-glutamyl-[protein] + methanol + H(+). It carries out the reaction L-glutaminyl-[protein] + H2O = L-glutamyl-[protein] + NH4(+). Involved in chemotaxis. Part of a chemotaxis signal transduction system that modulates chemotaxis in response to various stimuli. Catalyzes the demethylation of specific methylglutamate residues introduced into the chemoreceptors (methyl-accepting chemotaxis proteins or MCP) by CheR. Also mediates the irreversible deamidation of specific glutamine residues to glutamic acid. The chain is Protein-glutamate methylesterase/protein-glutamine glutaminase 1 from Bordetella avium (strain 197N).